A 387-amino-acid chain; its full sequence is 3-ketoacyl-CoA thiolase (387 aa).

The active-site Acyl-thioester intermediate is C91. Active-site proton acceptor residues include H343 and C373.

It belongs to the thiolase-like superfamily. Thiolase family. Heterotetramer of two alpha chains (FadB) and two beta chains (FadA).

The protein localises to the cytoplasm. It catalyses the reaction an acyl-CoA + acetyl-CoA = a 3-oxoacyl-CoA + CoA. It participates in lipid metabolism; fatty acid beta-oxidation. Catalyzes the final step of fatty acid oxidation in which acetyl-CoA is released and the CoA ester of a fatty acid two carbons shorter is formed. The sequence is that of 3-ketoacyl-CoA thiolase from Yersinia pseudotuberculosis serotype O:1b (strain IP 31758).